The sequence spans 622 residues: Probable potassium transport system protein Kup 2 (622 aa).

A run of 12 helical transmembrane segments spans residues 9–29 (LSGVTLAAIGVVYGDIGTSPL), 46–66 (PASILGFLSLIFWLLILVVSV), 99–119 (TPLLIILGLIGGSFFYGEVVI), 137–157 (PSLDPYIVPLSVLVLTLLFAI), 169–189 (FAPIMLTWFITLAVLGLNSIF), 213–233 (ASFFALGAVVLAITGVEALYA), 247–267 (WFMVVLPSLVLNYFGQGALLL), 285–305 (ALLPLLLLATLATVIASQAVI), 337–357 (IYIPVINWMLYISVVIVIMSF), 363–383 (LAAAYGIAVTGTMVLTSILSC), 396–416 (LVAALFVALLAIDVPLFAANL), and 419–439 (IFSGGWLPLTLGAVMFTVMTS).

It belongs to the HAK/KUP transporter (TC 2.A.72) family.

The protein resides in the cell inner membrane. It carries out the reaction K(+)(in) + H(+)(in) = K(+)(out) + H(+)(out). Functionally, transport of potassium into the cell. Likely operates as a K(+):H(+) symporter. The sequence is that of Probable potassium transport system protein Kup 2 from Aeromonas hydrophila subsp. hydrophila (strain ATCC 7966 / DSM 30187 / BCRC 13018 / CCUG 14551 / JCM 1027 / KCTC 2358 / NCIMB 9240 / NCTC 8049).